We begin with the raw amino-acid sequence, 454 residues long: Aquaporin-7 (454 aa).

The Cytoplasmic portion of the chain corresponds to 1 to 71 (MNINEPRDGG…LHLHNKTRNH (71 aa)). Residues 72 to 92 (FVATVAEFAGTTLFLFFAFSG) traverse the membrane as a helical segment. Over 93 to 115 (TQVALLATPANDSNVVGTPSNPA) the chain is Extracellular. Residue N103 is glycosylated (N-linked (GlcNAc...) asparagine). The helical transmembrane segment at 116–136 (QLLYVSLCFGFSLAVNAWVFF) threads the bilayer. At 137–163 (RISGGLFNPAVTMGMCIVGALPYFRGL) the chain is on the cytoplasmic side. Positions 144 to 146 (NPA) match the NPA 1 motif. Residues 164–184 (LLIFAQIIGGIAAAAIVSALF) form a helical membrane-spanning segment. Residues 185 to 202 (PGPITFRTSLGGGTSIVQ) are Extracellular-facing. Residues 203-223 (GLFIEMFLTAELVFTIFMLAA) traverse the membrane as a helical segment. The Cytoplasmic segment spans residues 224–229 (EKHKGT). The chain crosses the membrane as a helical span at residues 230–250 (FIAPIGIGLSLFIAELTGVYF). The Extracellular segment spans residues 251–274 (TGGSVNPARSFGPSVVSGQFTGYH). The NPA 2 signature appears at 256–258 (NPA). The chain crosses the membrane as a helical span at residues 275–295 (WIYWVGPILGAILASAFYKFI). Topologically, residues 296–454 (KMLEYETANP…ENLRDNTHNN (159 aa)) are cytoplasmic. Positions 343–454 (GASHVHENGN…ENLRDNTHNN (112 aa)) are disordered.

Belongs to the MIP/aquaporin (TC 1.A.8) family.

The protein localises to the membrane. It carries out the reaction H2O(in) = H2O(out). In terms of biological role, water channel required to facilitate the transport of water across membranes. Involved in conidiation. The chain is Aquaporin-7 from Botryotinia fuckeliana (strain B05.10) (Noble rot fungus).